The following is a 449-amino-acid chain: Wilms tumor protein (449 aa).

A disordered region spans residues 48–84 (YGSLGGPAPPPAPPPPPPPPPHSFIKQEPSWGGAEPH). Positions 54 to 69 (PAPPPAPPPPPPPPPH) are enriched in pro residues. Glycyl lysine isopeptide (Lys-Gly) (interchain with G-Cter in SUMO) cross-links involve residues K73 and K177. The short motif at 236–244 (MTWNQMNLG) is the 9aaTAD element. C2H2-type zinc fingers lie at residues 323-347 (FMCAYPGCNKRYFKLSHLQMHSRKH), 353-377 (YQCDFKDCERRFSRSDQLKRHQRRH), and 383-405 (FQCKTCQRKFSRSDHLKTHTRTH). Important for interaction with target DNA regions lie at residues 367–381 (SDQLKRHQRRHTGVK) and 393–401 (SRSDHLKTH). Residues 408 to 410 (KTS) carry the KTS motif motif. The segment at 414-438 (FSCRWPSCQKKFARSDELVRHHNMH) adopts a C2H2-type 4 zinc-finger fold. K444 is covalently cross-linked (Glycyl lysine isopeptide (Lys-Gly) (interchain with G-Cter in SUMO2)).

Belongs to the EGR C2H2-type zinc-finger protein family. As to quaternary structure, homodimer. Interacts with WTIP. Interacts with actively translating polysomes. Detected in nuclear ribonucleoprotein (mRNP) particles. Interacts with HNRNPU via the zinc-finger region. Interacts with U2AF2. Interacts with CITED2. Interacts with ZNF224 via the zinc-finger region. Interacts with WTAP and SRY. Interacts with AMER1. Interacts with RBM4. In terms of tissue distribution, expressed in the kidney and a subset of hematopoietic cells.

The protein resides in the nucleus. It localises to the nucleolus. Its subcellular location is the cytoplasm. It is found in the nucleus speckle. The protein localises to the nucleoplasm. Its function is as follows. Transcription factor that plays an important role in cellular development and cell survival. Recognizes and binds to the DNA sequence 5'-GCG(T/G)GGGCG-3'. Regulates the expression of numerous target genes, including EPO. Plays an essential role for development of the urogenital system. It has a tumor suppressor as well as an oncogenic role in tumor formation. Function may be isoform-specific: isoforms lacking the KTS motif may act as transcription factors. Isoforms containing the KTS motif may bind mRNA and play a role in mRNA metabolism or splicing. Isoform 1 has lower affinity for DNA, and can bind RNA. The polypeptide is Wilms tumor protein (WT1) (Homo sapiens (Human)).